The primary structure comprises 395 residues: uncharacterized protein (395 aa).

Residues 182–238 are a coiled coil; the sequence is KKLEDILSTIAEIEDSIELEKILSLDQFLKSKLSNIKITNNQIDEAKAEFKEMFNKK.

This is an uncharacterized protein from Acanthamoeba polyphaga (Amoeba).